Reading from the N-terminus, the 93-residue chain is OMEGA-ectatommitoxin(02)-Rm1c (93 aa).

The first 30 residues, 1–30 (MKDSYISIVIAYLMVTFILVSSMPIEGEKG), serve as a signal peptide directing secretion. 3 disulfide bridges follow: Cys39/Cys52, Cys47/Cys68, and Cys70/Cys79. One can recognise an EGF-like domain in the interval 43-80 (YENYCFNGKCVHVVAQDEPGKPCYSCICDEFYIGERCG).

This sequence belongs to the EGF domain peptide family. Expressed by the venom gland.

The protein localises to the secreted. Functionally, ant peptide with probable defensive activity which acts as a potent agonist of the mammalian epidermal growth factor receptor (EGFR). Mimics, both structurally and functionally, vertebrate epidermal growth factor (EGF) peptide hormones. In vivo, intraplantar injection in mice causes long-lasting (several days) hypersensitivity of the injected paw to both mechanical and thermal stimuli. Its long-lasting effect is unusual for venom toxins whose effects are usually immediate. One possible explanation is that it would reduce the duration of a nest attack, discourage future attacks, or enhance the actions of subsequent exposure to other pain-inducing venom peptides. This chain is OMEGA-ectatommitoxin(02)-Rm1c, found in Rhytidoponera metallica (Australian green-headed ant).